Here is a 479-residue protein sequence, read N- to C-terminus: Gamma-aminobutyric acid receptor subunit rho-1 (479 aa).

Positions 1–21 are cleaved as a signal peptide; the sequence is MLAVPNMRFGIFLLWWGWVLA. The Extracellular segment spans residues 22-280; it reads TESRMHWPGR…LYINFTLRRH (259 aa). The disordered stretch occupies residues 32 to 55; the sequence is EVHEMSKKGRPQRQRREVHEDAHK. Residues 45 to 55 show a composition bias toward basic and acidic residues; it reads QRREVHEDAHK. 4-aminobutanoate is bound at residue arginine 125. A glycan (N-linked (GlcNAc...) asparagine) is linked at asparagine 140. Serine 189 serves as a coordination point for 4-aminobutanoate. Cysteine 198 and cysteine 212 are disulfide-bonded. Glutamate 217 lines the 4-aminobutanoate pocket. 2 N-linked (GlcNAc...) asparagine glycosylation sites follow: asparagine 234 and asparagine 274. The chain crosses the membrane as a helical span at residues 281–301; it reads IFFFLLQTYFPATLMVMLSWV. The Cytoplasmic portion of the chain corresponds to 302 to 313; the sequence is SFWIDRRAVPAR. The chain crosses the membrane as a helical span at residues 314–334; that stretch reads VPLGITTVLTMSTIITGVNAS. Topologically, residues 335–345 are extracellular; that stretch reads MPRVSYIKAVD. Residues 346–366 form a helical membrane-spanning segment; sequence IYLWVSFVFVFLSVLEYAAVN. Residues 367 to 457 lie on the Cytoplasmic side of the membrane; that stretch reads YLTTVQERKE…MRIDTHAIDK (91 aa). A helical membrane pass occupies residues 458–478; it reads YSRIIFPAAYILFNLIYWSIF. Residue serine 479 is a topological domain, extracellular.

It belongs to the ligand-gated ion channel (TC 1.A.9) family. Gamma-aminobutyric acid receptor (TC 1.A.9.5) subfamily. GABRR1 sub-subfamily. As to quaternary structure, three rho subunits (rho-1/GBRR1, rho-2/GBRR2 and rho-3/GBRR3) coassemble either to form functional homopentamers or heteropentamers. Rho-1/GBRR1 subunits can also associate with alpha-1/GBRA1 subunits to form a functional GABAAR. Interacts with SQSTM1. In terms of tissue distribution, highly expressed in the retina. Expressed in a lesser extent in brain, lung and thymus.

Its subcellular location is the postsynaptic cell membrane. It localises to the cell membrane. The enzyme catalyses chloride(in) = chloride(out). Its activity is regulated as follows. Inhibited by TPMPA, a rho-specific antagonist, when forming a homopentamer. In contrast with other GABAARs, rho-1 GABAAR is not inhibited by bicuculline, when forming a homopentamer. In terms of biological role, rho subunit of the pentameric ligand-gated chloride channels responsible for mediating the effects of gamma-aminobutyric acid (GABA), the major inhibitory neurotransmitter in the brain. Rho-containing GABA-gated chloride channels are a subclass of GABA(A) receptors (GABAARs) entirely composed of rho subunits, where GABA molecules bind at the rho intersubunit interfaces. When activated by GABA, rho-GABAARs selectively allow the flow of chloride anions across the cell membrane down their electrochemical gradient. Rho-1 subunits are primarily expressed in retina where rho-1-containing GABAARs may play a role in retinal neurotransmission. Rho-1 GABAARs are also involved in neuronal tonic (extrasynaptic) and phasic (synaptic) transmission in the Purkinje neurons of the cerebellum. Rho-1 GABAARs may also contribute to the regulation of glial development in the cerebellum by controlling extrasynaptic transmission. This Homo sapiens (Human) protein is Gamma-aminobutyric acid receptor subunit rho-1.